Here is a 53-residue protein sequence, read N- to C-terminus: MAQKRGTRLGCNDCNEINYITRKNAKKNPEKLSLNKYCSRCRGTTVHKEVKRK.

The protein belongs to the bacterial ribosomal protein bL33 family.

This is Large ribosomal subunit protein bL33A from Mycoplasmoides gallisepticum (strain R(low / passage 15 / clone 2)) (Mycoplasma gallisepticum).